Consider the following 469-residue polypeptide: Cysteine--tRNA ligase (469 aa).

A Zn(2+)-binding site is contributed by cysteine 33. The 'HIGH' region signature appears at 35–45; sequence PTVYNLLHIGN. 3 residues coordinate Zn(2+): cysteine 214, histidine 239, and glutamate 243. A 'KMSKS' region motif is present at residues 271–275; that stretch reads KMSKS. Position 274 (lysine 274) interacts with ATP.

Belongs to the class-I aminoacyl-tRNA synthetase family. Monomer. Zn(2+) is required as a cofactor.

The protein resides in the cytoplasm. It catalyses the reaction tRNA(Cys) + L-cysteine + ATP = L-cysteinyl-tRNA(Cys) + AMP + diphosphate. This Petrotoga mobilis (strain DSM 10674 / SJ95) protein is Cysteine--tRNA ligase.